Here is a 282-residue protein sequence, read N- to C-terminus: 2-dehydro-3-deoxyphosphooctonate aldolase (282 aa).

The protein belongs to the KdsA family.

The protein localises to the cytoplasm. The catalysed reaction is D-arabinose 5-phosphate + phosphoenolpyruvate + H2O = 3-deoxy-alpha-D-manno-2-octulosonate-8-phosphate + phosphate. It functions in the pathway carbohydrate biosynthesis; 3-deoxy-D-manno-octulosonate biosynthesis; 3-deoxy-D-manno-octulosonate from D-ribulose 5-phosphate: step 2/3. The protein operates within bacterial outer membrane biogenesis; lipopolysaccharide biosynthesis. The polypeptide is 2-dehydro-3-deoxyphosphooctonate aldolase (Shewanella baltica (strain OS223)).